We begin with the raw amino-acid sequence, 186 residues long: Ribosome-recycling factor (186 aa).

Belongs to the RRF family.

Its subcellular location is the cytoplasm. In terms of biological role, responsible for the release of ribosomes from messenger RNA at the termination of protein biosynthesis. May increase the efficiency of translation by recycling ribosomes from one round of translation to another. The polypeptide is Ribosome-recycling factor (Rubrobacter xylanophilus (strain DSM 9941 / JCM 11954 / NBRC 16129 / PRD-1)).